A 1698-amino-acid polypeptide reads, in one-letter code: Cullin-7 (1698 aa).

The tract at residues 315–357 (QASDRPRSSARSPGSIFQPQLADVSPGLPAAQAQPSFRRSRRF) is disordered. Position 339 is a phosphoserine (Ser339). One can recognise a CPH domain in the interval 360–433 (RSEFASGNTY…HWHMLEILGF (74 aa)). Over residues 601–611 (SEDAAKVEAKE) the composition is skewed to basic and acidic residues. The tract at residues 601–623 (SEDAAKVEAKEPPSQSPNTPLQR) is disordered. A DOC domain is found at 814–993 (PINIPFFDVF…HTRLFYMVRA (180 aa)). The interval 1345-1370 (GASGKEHKSEKEEEAGAAAVVDVAEG) is disordered. Residue Lys1576 forms a Glycyl lysine isopeptide (Lys-Gly) (interchain with G-Cter in NEDD8) linkage.

The protein belongs to the cullin family. Component of the 3M complex, composed of core components CUL7, CCDC8 and OBSL1. Component of the Cul7-RING(FBXW8) complex consisting of CUL7, RBX1, SKP1 and FBXW8. Within the Cul7-RING(FBXW8) complex interacts with FBXW8 and RBX1, but not with SKP1. Interacts with CUL1 (via the C-terminal domain); the interaction seems to be mediated by FBXW8; it is likely specific to FBXW8, but not other F-box proteins. Interacts (via the CPH domain) with p53/TP53; the interaction preferentially involves tetrameric and dimeric p53/TP53; this interaction recruits p53/TP53 for ubiquitination by neddylated CUL1-RBX1. The CUL7-CUL9 heterodimer seems to interact specifically with p53/TP53. Interacts with FBXW8; interaction is mutually exclusive of binding to CUL9 or p53/TP53. Interacts with CUL9; leading to inhibited CUL9 activity. Interacts with OBSL1. Interacts (as part of the 3M complex) with HDAC4 and HDAC5; it is negatively regulated by ANKRA2. As to quaternary structure, (Microbial infection) Interacts with SV40 Large T antigen; this interaction seems to inhibit CUL7. Post-translationally, according to a report, may not be neddylated despite the conserved consensus site for neddylation at Lys-1576. Structural study of the Cul7-RING(FBXW8) reveals that both CUL7 and RBX1 are in orientations that are incompatible with neddylation. Highly expressed in fetal kidney and adult skeletal muscle. Also abundant in fetal brain, as well as in adult pancreas, kidney, placenta and heart. Detected in trophoblasts, lymphoblasts, osteoblasts, chondrocytes and skin fibroblasts.

Its subcellular location is the cytoplasm. The protein resides in the cytoskeleton. It is found in the microtubule organizing center. It localises to the centrosome. The protein localises to the perinuclear region. Its subcellular location is the golgi apparatus. The protein operates within protein modification; protein ubiquitination. Core component of the 3M and Cul7-RING(FBXW8) complexes, which mediate the ubiquitination and subsequent proteasomal degradation of target proteins. Core component of the 3M complex, a complex required to regulate microtubule dynamics and genome integrity. It is unclear how the 3M complex regulates microtubules, it could act by controlling the level of a microtubule stabilizer. The Cul7-RING(FBXW8) complex alone lacks ubiquitination activity and does not promote polyubiquitination and proteasomal degradation of p53/TP53. However it mediates recruitment of p53/TP53 for ubiquitination by neddylated CUL1-RBX1. Interaction with CUL9 is required to inhibit CUL9 activity and ubiquitination of BIRC5. The Cul7-RING(FBXW8) complex also mediates ubiquitination and consequent degradation of target proteins such as GORASP1, IRS1 and MAP4K1/HPK1. Ubiquitination of GORASP1 regulates Golgi morphogenesis and dendrite patterning in brain. Mediates ubiquitination and degradation of IRS1 in a mTOR-dependent manner: the Cul7-RING(FBXW8) complex recognizes and binds IRS1 previously phosphorylated by S6 kinase (RPS6KB1 or RPS6KB2). The Cul7-RING(FBXW8) complex also mediates ubiquitination of MAP4K1/HPK1: recognizes and binds autophosphorylated MAP4K1/HPK1, leading to its degradation, thereby affecting cell proliferation and differentiation. Acts as a regulator in trophoblast cell epithelial-mesenchymal transition and placental development. While the Cul7-RING(FBXW8) and the 3M complexes are associated and involved in common processes, CUL7 and the Cul7-RING(FBXW8) complex may have additional functions. Probably plays a role in the degradation of proteins involved in endothelial proliferation and/or differentiation. The polypeptide is Cullin-7 (CUL7) (Homo sapiens (Human)).